Here is a 41-residue protein sequence, read N- to C-terminus: Alpha-conotoxin TxIB (41 aa).

Residues 1–20 (FDGRNTSANNKATDLMALPV) constitute a propeptide that is removed on maturation. Intrachain disulfides connect Cys-23/Cys-29 and Cys-24/Cys-37. The segment at 25–27 (SDP) is ser-Xaa-Pro motif, crucial for potent interaction with nAChR. Cys-37 carries the post-translational modification Cysteine amide; in Alpha-conotoxin TxIB. Positions 39–41 (GRR) are excised as a propeptide.

It belongs to the conotoxin A superfamily. As to expression, expressed by the venom duct.

It localises to the secreted. Its function is as follows. Alpha-conotoxins act on postsynaptic membranes, they bind to the nicotinic acetylcholine receptors (nAChR) and thus inhibit them. This conotoxin is a subtype-specific blocker of alpha-6/alpha-3-beta-2-beta-3 (CHRNA6/CHRNA3-CHRNB2-CHRNB3) nAChRs nicotinic acetylcholine receptors (nAChRs) (IC(50)=28.4 nM). This is Alpha-conotoxin TxIB from Conus textile (Cloth-of-gold cone).